Consider the following 278-residue polypeptide: Aliphatic sulfonates import ATP-binding protein SsuB (278 aa).

An ABC transporter domain is found at Leu15–Leu236. Gly47–Ser54 contributes to the ATP binding site. The span at Pro251 to Pro264 shows a compositional bias: basic and acidic residues. Positions Pro251 to Val278 are disordered.

The protein belongs to the ABC transporter superfamily. Aliphatic sulfonates importer (TC 3.A.1.17.2) family. In terms of assembly, the complex is composed of two ATP-binding proteins (SsuB), two transmembrane proteins (SsuC) and a solute-binding protein (SsuA).

The protein localises to the cell inner membrane. The catalysed reaction is ATP + H2O + aliphatic sulfonate-[sulfonate-binding protein]Side 1 = ADP + phosphate + aliphatic sulfonateSide 2 + [sulfonate-binding protein]Side 1.. In terms of biological role, part of the ABC transporter complex SsuABC involved in aliphatic sulfonates import. Responsible for energy coupling to the transport system. This Albidiferax ferrireducens (strain ATCC BAA-621 / DSM 15236 / T118) (Rhodoferax ferrireducens) protein is Aliphatic sulfonates import ATP-binding protein SsuB.